Consider the following 398-residue polypeptide: Pentalenolactone synthase (398 aa).

Cysteine 347 contributes to the heme binding site.

The protein belongs to the cytochrome P450 family. It depends on heme as a cofactor.

The catalysed reaction is pentalenolactone F + 2 reduced [2Fe-2S]-[ferredoxin] + O2 + 2 H(+) = pentalenolactone + 2 oxidized [2Fe-2S]-[ferredoxin] + 2 H2O. It functions in the pathway antibiotic biosynthesis; pentalenolactone biosynthesis. In terms of biological role, catalyzes the final step in the biosynthesis of the sesquiterpenoid antibiotic pentalenolactone by mediating the oxidative rearrangement of pentalenolactone F to pentalenolactone. In Streptomyces exfoliatus (Streptomyces hydrogenans), this protein is Pentalenolactone synthase (penM).